Reading from the N-terminus, the 366-residue chain is Glucose 1-dehydrogenase (366 aa).

Cysteine 39 contributes to the Zn(2+) binding site. Position 41 (threonine 41) interacts with substrate. Residues histidine 66 and glutamate 67 each contribute to the Zn(2+) site. Residue asparagine 89 participates in substrate binding. Residues cysteine 93, cysteine 96, cysteine 99, and cysteine 107 each contribute to the Zn(2+) site. Glutamate 114, glutamine 150, and aspartate 154 together coordinate substrate. A Zn(2+)-binding site is contributed by glutamine 150. NADP(+)-binding positions include 189–192 (TGPI), 211–213 (NRR), 277–279 (FGF), 305–307 (LVN), and lysine 354. Asparagine 307 is a binding site for substrate.

This sequence belongs to the zinc-containing alcohol dehydrogenase family. Glucose 1-dehydrogenase subfamily. As to quaternary structure, homotetramer. It depends on Zn(2+) as a cofactor.

The catalysed reaction is D-glucose + NAD(+) = D-glucono-1,5-lactone + NADH + H(+). It carries out the reaction D-glucose + NADP(+) = D-glucono-1,5-lactone + NADPH + H(+). It catalyses the reaction D-galactose + NAD(+) = D-galactono-1,4-lactone + NADH + H(+). The enzyme catalyses D-galactose + NADP(+) = D-galactono-1,5-lactone + NADPH + H(+). The catalysed reaction is an aldopyranose + NAD(+) = aldono-1,5-lactone + NADH + H(+). It carries out the reaction an aldopyranose + NADP(+) = aldono-1,5-lactone + NADPH + H(+). Inhibited by EDTA in vitro. Its function is as follows. Catalyzes the NAD(P)(+)-dependent oxidation of D-glucose to D-gluconate via gluconolactone. Displays broad substrate specificity since it is able to catalyze the oxidation of a number of alternative aldose sugars, such as D-galactose, D-xylose and L-arabinose, to the corresponding glyconate. Can utilize both NAD(+) and NADP(+) as electron acceptor. Physiologically, seems to be involved in the degradation of both glucose and galactose through a non-phosphorylative variant of the Entner-Doudoroff pathway. This chain is Glucose 1-dehydrogenase, found in Saccharolobus solfataricus (Sulfolobus solfataricus).